Consider the following 81-residue polypeptide: Photosystem I iron-sulfur center (81 aa).

4Fe-4S ferredoxin-type domains lie at 2-31 (SHSVKIYDTCIGCTQCVRACPTDVLEMVPW) and 39-68 (IASAPRTEDCVGCKRCESACPTDFLSVRVY). [4Fe-4S] cluster-binding residues include Cys11, Cys14, Cys17, Cys21, Cys48, Cys51, Cys54, and Cys58.

The eukaryotic PSI reaction center is composed of at least 11 subunits. Requires [4Fe-4S] cluster as cofactor.

Its subcellular location is the plastid. It is found in the chloroplast thylakoid membrane. It catalyses the reaction reduced [plastocyanin] + hnu + oxidized [2Fe-2S]-[ferredoxin] = oxidized [plastocyanin] + reduced [2Fe-2S]-[ferredoxin]. Its function is as follows. Apoprotein for the two 4Fe-4S centers FA and FB of photosystem I (PSI); essential for photochemical activity. FB is the terminal electron acceptor of PSI, donating electrons to ferredoxin. The C-terminus interacts with PsaA/B/D and helps assemble the protein into the PSI complex. Required for binding of PsaD and PsaE to PSI. PSI is a plastocyanin/cytochrome c6-ferredoxin oxidoreductase, converting photonic excitation into a charge separation, which transfers an electron from the donor P700 chlorophyll pair to the spectroscopically characterized acceptors A0, A1, FX, FA and FB in turn. This Pleurastrum terricola (Filamentous green alga) protein is Photosystem I iron-sulfur center.